The primary structure comprises 109 residues: Large ribosomal subunit protein uL22 (109 aa).

It belongs to the universal ribosomal protein uL22 family. As to quaternary structure, part of the 50S ribosomal subunit.

Functionally, this protein binds specifically to 23S rRNA; its binding is stimulated by other ribosomal proteins, e.g. L4, L17, and L20. It is important during the early stages of 50S assembly. It makes multiple contacts with different domains of the 23S rRNA in the assembled 50S subunit and ribosome. In terms of biological role, the globular domain of the protein is located near the polypeptide exit tunnel on the outside of the subunit, while an extended beta-hairpin is found that lines the wall of the exit tunnel in the center of the 70S ribosome. This Neisseria gonorrhoeae (strain ATCC 700825 / FA 1090) protein is Large ribosomal subunit protein uL22.